The primary structure comprises 501 residues: MSSSGMPDLPAPLTNIKIQHTKLFINNEWHDSVSGKTFPVFNPATEEKICEVEEADKEDVDKAVKAAREAFQMGSPWRTMDASERGQLIYKLADLIERDRLLLATLESINAGKIFASAYLMDLDYCIKVLRYCAGWADKIQGRTIPVDGEFFSYTRHEPIGVCGQIFPWNAPMILLACKIGPALCCGNTVIVKPAEQTPLTALHVASLIKEAGFPPGVVNIVPGYGPTAGAAISSHMDVDKVAFTGSTEVGKMIQEAAAKSNLKRVTLELGAKNPCIVFADADLDSAVEFAHQGVFTNQGQSCIAASKLFVEETIYDEFVQRSVERAKKYVFGNPLTPGVNHGPQINKAQHNKIMELIESGKKEGAKLECGGGPWGNKGYFIQPTIFSNVTDDMRIAKEEIFGPVQQIMKFKSLDEVIKRANNTYYGLVAGVFTKDLDKAVTVSSALQAGTVWVNCYLAASAQSPAGGFKMSGHGREMGEYGIHEYTEVKTVTMKISEKNS.

NAD(+) is bound at residue 246–251 (GSTEVG). The active-site Proton acceptor is the glutamate 269. The Nucleophile role is filled by cysteine 303.

It belongs to the aldehyde dehydrogenase family. As to quaternary structure, homotetramer. Eye specific, with very high expression in the lens.

It is found in the cytoplasm. It carries out the reaction an aldehyde + NAD(+) + H2O = a carboxylate + NADH + 2 H(+). The protein operates within alcohol metabolism; ethanol degradation; acetate from ethanol: step 2/2. Its function is as follows. Major component of the eye of elephant shrews, which in contrast to other mammals, possesses both a lens- and a non-lens class-1 aldehyde dehydrogenase 1. This eye-specific form is a structural protein of the lens and, in other part of the eye, serves as the major form of ALDH1. Can convert/oxidize retinaldehyde to retinoic acid. This Macroscelides proboscideus (Short-eared elephant shrew) protein is Aldehyde dehydrogenase, cytosolic 1 (ALDH1).